A 92-amino-acid chain; its full sequence is Small ribosomal subunit protein uS19 (92 aa).

The protein belongs to the universal ribosomal protein uS19 family.

Its function is as follows. Protein S19 forms a complex with S13 that binds strongly to the 16S ribosomal RNA. The chain is Small ribosomal subunit protein uS19 from Leuconostoc mesenteroides subsp. mesenteroides (strain ATCC 8293 / DSM 20343 / BCRC 11652 / CCM 1803 / JCM 6124 / NCDO 523 / NBRC 100496 / NCIMB 8023 / NCTC 12954 / NRRL B-1118 / 37Y).